Consider the following 659-residue polypeptide: UvrABC system protein B (659 aa).

The 158-residue stretch at 25–182 folds into the Helicase ATP-binding domain; that stretch reads QSIENGNRGQ…KKLIEIQYER (158 aa). An ATP-binding site is contributed by 38–45; it reads GVTGSGKT. Positions 91-114 match the Beta-hairpin motif; the sequence is YYDYYQPEAYVPQTDTFIEKDASI. Residues 429 to 582 form the Helicase C-terminal domain; it reads QIDDLYGEIQ…QMEYNEEHNI (154 aa). The region spanning 622-657 is the UVR domain; it reads EKLIEQYEEEMKEAAKNLQFERAAELRDIIKDLKEN.

This sequence belongs to the UvrB family. Forms a heterotetramer with UvrA during the search for lesions. Interacts with UvrC in an incision complex.

The protein localises to the cytoplasm. The UvrABC repair system catalyzes the recognition and processing of DNA lesions. A damage recognition complex composed of 2 UvrA and 2 UvrB subunits scans DNA for abnormalities. Upon binding of the UvrA(2)B(2) complex to a putative damaged site, the DNA wraps around one UvrB monomer. DNA wrap is dependent on ATP binding by UvrB and probably causes local melting of the DNA helix, facilitating insertion of UvrB beta-hairpin between the DNA strands. Then UvrB probes one DNA strand for the presence of a lesion. If a lesion is found the UvrA subunits dissociate and the UvrB-DNA preincision complex is formed. This complex is subsequently bound by UvrC and the second UvrB is released. If no lesion is found, the DNA wraps around the other UvrB subunit that will check the other stand for damage. This chain is UvrABC system protein B, found in Clostridium perfringens (strain ATCC 13124 / DSM 756 / JCM 1290 / NCIMB 6125 / NCTC 8237 / Type A).